A 302-amino-acid polypeptide reads, in one-letter code: Protoheme IX farnesyltransferase (302 aa).

The next 9 helical transmembrane spans lie at 27–47 (VVAL…PGMV), 53–73 (LFGL…NHVI), 100–120 (LVFA…AVNV), 121–141 (LTAV…TVFL), 149–169 (IVWG…AVTG), 175–195 (PLLL…ALAI), 215–235 (VAFT…VSLV), 237–257 (FIIH…GIGF), and 273–293 (AMPT…LLLV).

The protein belongs to the UbiA prenyltransferase family. Protoheme IX farnesyltransferase subfamily.

Its subcellular location is the cell inner membrane. The catalysed reaction is heme b + (2E,6E)-farnesyl diphosphate + H2O = Fe(II)-heme o + diphosphate. It participates in porphyrin-containing compound metabolism; heme O biosynthesis; heme O from protoheme: step 1/1. Converts heme B (protoheme IX) to heme O by substitution of the vinyl group on carbon 2 of heme B porphyrin ring with a hydroxyethyl farnesyl side group. The polypeptide is Protoheme IX farnesyltransferase (Thioalkalivibrio sulfidiphilus (strain HL-EbGR7)).